The sequence spans 393 residues: S-adenosylmethionine synthase 1 (393 aa).

Glutamate 9 contacts Mg(2+). Histidine 15 provides a ligand contact to ATP. Glutamate 43 contacts K(+). L-methionine-binding residues include glutamate 56 and glutamine 99. ATP contacts are provided by residues 167-169 (DGK), 235-238 (SGRF), aspartate 246, 252-253 (RK), alanine 269, lysine 273, and lysine 277. L-methionine is bound at residue aspartate 246. Lysine 277 contributes to the L-methionine binding site.

The protein belongs to the AdoMet synthase family. As to quaternary structure, homotetramer. Requires Mn(2+) as cofactor. The cofactor is Mg(2+). It depends on Co(2+) as a cofactor. K(+) serves as cofactor.

It localises to the cytoplasm. The enzyme catalyses L-methionine + ATP + H2O = S-adenosyl-L-methionine + phosphate + diphosphate. It participates in amino-acid biosynthesis; S-adenosyl-L-methionine biosynthesis; S-adenosyl-L-methionine from L-methionine: step 1/1. Catalyzes the formation of S-adenosylmethionine from methionine and ATP. The reaction comprises two steps that are both catalyzed by the same enzyme: formation of S-adenosylmethionine (AdoMet) and triphosphate, and subsequent hydrolysis of the triphosphate. This is S-adenosylmethionine synthase 1 (SAMS1) from Brassica juncea (Indian mustard).